The primary structure comprises 492 residues: Putative cytochrome P450 136 (492 aa).

C439 is a binding site for heme.

It belongs to the cytochrome P450 family. Heme serves as cofactor.

This chain is Putative cytochrome P450 136 (cyp136), found in Mycobacterium tuberculosis (strain CDC 1551 / Oshkosh).